The sequence spans 126 residues: Large ribosomal subunit protein bL12 (126 aa).

It belongs to the bacterial ribosomal protein bL12 family. As to quaternary structure, homodimer. Part of the ribosomal stalk of the 50S ribosomal subunit. Forms a multimeric L10(L12)X complex, where L10 forms an elongated spine to which 2 to 4 L12 dimers bind in a sequential fashion. Binds GTP-bound translation factors.

Forms part of the ribosomal stalk which helps the ribosome interact with GTP-bound translation factors. Is thus essential for accurate translation. The chain is Large ribosomal subunit protein bL12 from Chlorobaculum parvum (strain DSM 263 / NCIMB 8327) (Chlorobium vibrioforme subsp. thiosulfatophilum).